A 109-amino-acid chain; its full sequence is RNA-binding protein Hfq (109 aa).

Positions Asp9–Val68 constitute a Sm domain.

This sequence belongs to the Hfq family. As to quaternary structure, homohexamer.

Functionally, RNA chaperone that binds small regulatory RNA (sRNAs) and mRNAs to facilitate mRNA translational regulation in response to envelope stress, environmental stress and changes in metabolite concentrations. Also binds with high specificity to tRNAs. This Francisella philomiragia subsp. philomiragia (strain ATCC 25017 / CCUG 19701 / FSC 153 / O#319-036) protein is RNA-binding protein Hfq.